A 322-amino-acid chain; its full sequence is NADH-cytochrome b5 reductase 2 (322 aa).

Residues 31-48 (LAPIYAAVGITGVGVGLY) traverse the membrane as a helical segment. One can recognise an FAD-binding FR-type domain in the interval 72 to 176 (QGWFDLKLSE…KGPIVKYPWE (105 aa)). Residue 179–214 (KHNHICLIAGGTGITPMYQLAREIFKNPEDQTKVTL) coordinates FAD.

This sequence belongs to the flavoprotein pyridine nucleotide cytochrome reductase family. Requires FAD as cofactor.

Its subcellular location is the mitochondrion outer membrane. The enzyme catalyses 2 Fe(III)-[cytochrome b5] + NADH = 2 Fe(II)-[cytochrome b5] + NAD(+) + H(+). Functionally, may mediate the reduction of outer membrane cytochrome b5. This Aspergillus niger (strain ATCC MYA-4892 / CBS 513.88 / FGSC A1513) protein is NADH-cytochrome b5 reductase 2 (mcr1).